Reading from the N-terminus, the 600-residue chain is Spastin (600 aa).

The interval 1–39 (MNSPGGRNDKKKPVTPAAETGPGSPTTPPSTETQVVLAP) is disordered. Topologically, residues 1–53 (MNSPGGRNDKKKPVTPAAETGPGSPTTPPSTETQVVLAPPSPHKRNLHLFSYP) are cytoplasmic. The span at 15–33 (TPAAETGPGSPTTPPSTET) shows a compositional bias: low complexity. An intramembrane region (helical) is located at residues 54 to 74 (LLAVFSLLRFLAFQLGLLFVW). Residues 75-600 (CCELLSRSVM…WNQDFGDTTV (526 aa)) are Cytoplasmic-facing. The 76-residue stretch at 110-185 (YHQQAFQYIS…IMAKDRLQLL (76 aa)) folds into the MIT domain. Residues 213 to 294 (GLLKPEKGAV…KPATPTTAVR (82 aa)) are disordered. A compositionally biased stretch (basic and acidic residues) spans 216-228 (KPEKGAVPKKKDP). Polar residues predominate over residues 253-291 (PNCTSVPTSARQAGAHTPSNRGATGKNNTRTNKPATPTT). 366–373 (GPPGNGKT) contributes to the ATP binding site.

It belongs to the AAA ATPase family. Spastin subfamily. In terms of assembly, homohexamer. The homohexamer is stabilized by ATP-binding. The homohexamer may adopt a ring conformation through which microtubules pass prior to being severed. Interacts with microtubules.

The protein localises to the membrane. It localises to the cytoplasm. It is found in the cytoskeleton. The protein resides in the microtubule organizing center. Its subcellular location is the centrosome. The protein localises to the perinuclear region. It localises to the nucleus. The catalysed reaction is n ATP + n H2O + a microtubule = n ADP + n phosphate + (n+1) alpha/beta tubulin heterodimers.. ATP-dependent microtubule severing protein that specifically recognizes and cuts microtubules that are polyglutamylated. Preferentially recognizes and acts on microtubules decorated with short polyglutamate tails: severing activity increases as the number of glutamates per tubulin rises from one to eight, but decreases beyond this glutamylation threshold. Microtubule severing promotes reorganization of cellular microtubule arrays and the release of microtubules from the centrosome following nucleation. Required for membrane traffic from the endoplasmic reticulum (ER) to the Golgi and for completion of the abscission stage of cytokinesis. Also plays a role in axon growth and the formation of axonal branches. The protein is Spastin of Xenopus laevis (African clawed frog).